An 841-amino-acid polypeptide reads, in one-letter code: Formin-like protein 10 (841 aa).

Residues Met-1–Ala-25 form the signal peptide. A helical transmembrane segment spans residues Leu-102–Phe-122. 3 disordered regions span residues Ser-137 to Leu-166, Ile-254 to Arg-297, and Lys-403 to Arg-512. Positions Ser-139–Leu-152 are enriched in polar residues. A compositionally biased stretch (low complexity) spans Ile-254–Pro-278. The segment covering His-279 to Glu-293 has biased composition (polar residues). Over residues Leu-426–Pro-444 the composition is skewed to pro residues. Residues Glu-469–Ala-841 enclose the FH2 domain. Positions Tyr-502–Arg-512 are enriched in polar residues.

It belongs to the formin-like family. Class-I subfamily.

It localises to the membrane. Functionally, might be involved in the organization and polarity of the actin cytoskeleton. This Arabidopsis thaliana (Mouse-ear cress) protein is Formin-like protein 10 (FH10).